The primary structure comprises 485 residues: Noelin (485 aa).

An N-terminal signal peptide occupies residues 1-16 (MSVPLLKIGVVLSTMA). Asparagine 33, asparagine 103, asparagine 187, asparagine 288, asparagine 307, asparagine 394, asparagine 431, and asparagine 473 each carry an N-linked (GlcNAc...) asparagine glycan. A coiled-coil region spans residues 87 to 227 (RDARTKQLRQ…LRACMQKLAC (141 aa)). Residues 226-478 (ACGKLTGISD…QTLYNVTLFH (253 aa)) enclose the Olfactomedin-like domain. A disulfide bond links cysteine 227 and cysteine 409. The short motif at 482–485 (SDEL) is the Endoplasmic reticulum retention signal element.

As to quaternary structure, homotetramer; disulfide-linked. Dimer of dimers, giving rise to a V-shaped homotretramer. Isoform 1 and isoform 3 interact with RTN4R. Identified in a complex with RTN4R and LINGO1. Peripherally associated with AMPAR complex. AMPAR complex consists of an inner core made of 4 pore-forming GluA/GRIA proteins (GRIA1, GRIA2, GRIA3 and GRIA4) and 4 major auxiliary subunits arranged in a twofold symmetry. One of the two pairs of distinct binding sites is occupied either by CNIH2, CNIH3 or CACNG2, CACNG3. The other harbors CACNG2, CACNG3, CACNG4, CACNG8 or GSG1L. This inner core of AMPAR complex is complemented by outer core constituents binding directly to the GluA/GRIA proteins at sites distinct from the interaction sites of the inner core constituents. Outer core constituents include at least PRRT1, PRRT2, CKAMP44/SHISA9, FRRS1L and NRN1. The proteins of the inner and outer core serve as a platform for other, more peripherally associated AMPAR constituents, including OLFM1. Alone or in combination, these auxiliary subunits control the gating and pharmacology of the AMPAR complex and profoundly impact their biogenesis and protein processing. Interacts with OLFM2. Interacts with DTNB. In terms of tissue distribution, expressed in the brain cortex, olfactory bulb and vomeronasal neuroepithelium (at protein level). Detected in brain cortex, hippocampus, dorsal root ganglion and olfactory bulb.

It localises to the secreted. The protein resides in the synapse. It is found in the endoplasmic reticulum. Its subcellular location is the cell projection. The protein localises to the axon. It localises to the perikaryon. Contributes to the regulation of axonal growth in the embryonic and adult central nervous system by inhibiting interactions between RTN4R and LINGO1. Inhibits RTN4R-mediated axon growth cone collapse. May play an important role in regulating the production of neural crest cells by the neural tube. May be required for normal responses to olfactory stimuli. The protein is Noelin (Olfm1) of Mus musculus (Mouse).